Consider the following 264-residue polypeptide: S-adenosylmethionine decarboxylase proenzyme (264 aa).

The active-site Schiff-base intermediate with substrate; via pyruvic acid is the serine 114. Position 114 is a pyruvic acid (Ser); by autocatalysis (serine 114). Histidine 119 acts as the Proton acceptor; for processing activity in catalysis. The active-site Proton donor; for catalytic activity is cysteine 142.

It belongs to the prokaryotic AdoMetDC family. Type 2 subfamily. In terms of assembly, heterooctamer of four alpha and four beta chains arranged as a tetramer of alpha/beta heterodimers. It depends on pyruvate as a cofactor. In terms of processing, is synthesized initially as an inactive proenzyme. Formation of the active enzyme involves a self-maturation process in which the active site pyruvoyl group is generated from an internal serine residue via an autocatalytic post-translational modification. Two non-identical subunits are generated from the proenzyme in this reaction, and the pyruvate is formed at the N-terminus of the alpha chain, which is derived from the carboxyl end of the proenzyme. The post-translation cleavage follows an unusual pathway, termed non-hydrolytic serinolysis, in which the side chain hydroxyl group of the serine supplies its oxygen atom to form the C-terminus of the beta chain, while the remainder of the serine residue undergoes an oxidative deamination to produce ammonia and the pyruvoyl group blocking the N-terminus of the alpha chain.

It carries out the reaction S-adenosyl-L-methionine + H(+) = S-adenosyl 3-(methylsulfanyl)propylamine + CO2. It participates in amine and polyamine biosynthesis; S-adenosylmethioninamine biosynthesis; S-adenosylmethioninamine from S-adenosyl-L-methionine: step 1/1. In terms of biological role, catalyzes the decarboxylation of S-adenosylmethionine to S-adenosylmethioninamine (dcAdoMet), the propylamine donor required for the synthesis of the polyamines spermine and spermidine from the diamine putrescine. This Chromohalobacter salexigens (strain ATCC BAA-138 / DSM 3043 / CIP 106854 / NCIMB 13768 / 1H11) protein is S-adenosylmethionine decarboxylase proenzyme.